We begin with the raw amino-acid sequence, 127 residues long: NADPH-dependent 7-cyano-7-deazaguanine reductase (127 aa).

The active-site Thioimide intermediate is the cysteine 40. Aspartate 47 serves as the catalytic Proton donor. Residues 62–64 (VEL) and 81–82 (HE) each bind substrate.

This sequence belongs to the GTP cyclohydrolase I family. QueF type 1 subfamily.

It is found in the cytoplasm. It catalyses the reaction 7-aminomethyl-7-carbaguanine + 2 NADP(+) = 7-cyano-7-deazaguanine + 2 NADPH + 3 H(+). It participates in tRNA modification; tRNA-queuosine biosynthesis. Its function is as follows. Catalyzes the NADPH-dependent reduction of 7-cyano-7-deazaguanine (preQ0) to 7-aminomethyl-7-deazaguanine (preQ1). This chain is NADPH-dependent 7-cyano-7-deazaguanine reductase, found in Campylobacter jejuni subsp. jejuni serotype O:6 (strain 81116 / NCTC 11828).